The primary structure comprises 501 residues: Acetylcholine receptor subunit beta (501 aa).

Positions 1–23 are cleaved as a signal peptide; that stretch reads MALGALLLLLGVLGTPLAPGARG. The Extracellular segment spans residues 24–244; the sequence is SEAEGQLIKK…VIFYLIIRRK (221 aa). Cys151 and Cys165 are oxidised to a cystine. Residue Asn164 is glycosylated (N-linked (GlcNAc...) asparagine). Helical transmembrane passes span 245–269, 277–295, and 311–332; these read PLFY…VFYL, MGLS…LLLA, and YLMF…VLNL. Over 333–469 the chain is Cytoplasmic; that stretch reads HHRSPHTHQM…WQFVAMVVDR (137 aa). Residues 362-382 form a disordered region; it reads RPKPERDQLPEPHHSLSPRSG. The span at 363-375 shows a compositional bias: basic and acidic residues; sequence PKPERDQLPEPHH. At Tyr390 the chain carries Phosphotyrosine; by Tyr-kinases. A helical transmembrane segment spans residues 470–488; the sequence is LFLWTFIVFTSVGTLVIFL.

Belongs to the ligand-gated ion channel (TC 1.A.9) family. Acetylcholine receptor (TC 1.A.9.1) subfamily. Beta-1/CHRNB1 sub-subfamily. Pentamer of two alpha chains, and one each of the beta, delta, and gamma (in immature muscle) or epsilon (in mature muscle) chains. The muscle heteropentamer composed of alpha-1, beta-1, delta, epsilon subunits interacts with the alpha-conotoxin ImII.

The protein resides in the postsynaptic cell membrane. It localises to the cell membrane. It carries out the reaction K(+)(in) = K(+)(out). The catalysed reaction is Na(+)(in) = Na(+)(out). Its function is as follows. After binding acetylcholine, the AChR responds by an extensive change in conformation that affects all subunits and leads to opening of an ion-conducting channel across the plasma membrane. The sequence is that of Acetylcholine receptor subunit beta (Chrnb1) from Mus musculus (Mouse).